A 753-amino-acid chain; its full sequence is Neuroendocrine convertase 1 (753 aa).

A signal peptide spans 1-27 (MEQRGWTLQCTAFAFFCVWCALSSVKA). Positions 28–110 (KRQFVNEWAA…QQYEKERSKR (83 aa)) are excised as a propeptide. A Peptidase S8 domain is found at 129 to 450 (QWYLQDTRMT…FGLLNAKALV (322 aa)). Residues Asp-167 and His-208 each act as charge relay system in the active site. Intrachain disulfides connect Cys-225–Cys-374 and Cys-317–Cys-347. Ser-382 functions as the Charge relay system in the catalytic mechanism. The N-linked (GlcNAc...) asparagine glycan is linked to Asn-401. One can recognise a P/Homo B domain in the interval 460–597 (NVPEKKECVV…KLILHGTSSQ (138 aa)). Cysteines 467 and 494 form a disulfide. The segment covering 633–651 (QKSLNGNLLVPKNSSSSNV) has biased composition (polar residues). Residues 633–663 (QKSLNGNLLVPKNSSSSNVEGRRDEQVQGTP) are disordered. Asn-645 is a glycosylation site (N-linked (GlcNAc...) asparagine).

Belongs to the peptidase S8 family. Furin subfamily. Ca(2+) is required as a cofactor.

The protein resides in the cytoplasmic vesicle. It is found in the secretory vesicle. The catalysed reaction is Release of protein hormones, neuropeptides and renin from their precursors, generally by hydrolysis of -Lys-Arg-|- bonds.. Functionally, involved in the processing of hormone and other protein precursors at sites comprised of pairs of basic amino acid residues. Substrates include POMC, renin, enkephalin, dynorphin, somatostatin, insulin and AGRP. This is Neuroendocrine convertase 1 (Pcsk1) from Mus cookii (Cook's mouse).